The following is a 758-amino-acid chain: Vitamin K-dependent gamma-carboxylase (758 aa).

Residues 1–34 (MAVSARPARAPRGSDKVKKDKAAQTSGPRQGSRM) are disordered. At Ala-2 the chain carries N-acetylalanine. Residues 2 to 60 (AVSARPARAPRGSDKVKKDKAAQTSGPRQGSRMGKLLGFEWTDVSSWERLVTLLNRPTD) lie on the Cytoplasmic side of the membrane. The span at 12–22 (RGSDKVKKDKA) shows a compositional bias: basic and acidic residues. Residues 61-81 (PAGLAVFRFLFGLMMVLDIPQ) traverse the membrane as a helical segment. Over 82–113 (ERGLSSLDRRYLDGLEVCRFPLLDALQPLPLD) the chain is Lumenal. A disulfide bridge connects residues Cys-99 and Cys-450. Residues 114–134 (WMYLIYTIMFLGALGMMLGLC) traverse the membrane as a helical segment. At 135 to 136 (YR) the chain is on the cytoplasmic side. Residues 137–157 (ISCVLFLLPYWYVFLLDKTSW) traverse the membrane as a helical segment. Residues 158 to 292 (NNHSYLYGLL…VSYFHCMNSQ (135 aa)) lie on the Lumenal side of the membrane. A helical membrane pass occupies residues 293-313 (LFSIGMFPYVMLASSPLFCSP). Residues 314–363 (EWPRKLVAHCPKKLQELLPLRTAPQPSTSCMYKRSRARGSQKPGLRHKLS) lie on the Cytoplasmic side of the membrane. Residues 364–384 (TAFTLLYLLEQLFLPYSHFLT) traverse the membrane as a helical segment. The Lumenal portion of the chain corresponds to 385-758 (QGYNNWTNGL…PDSHPVHSEF (374 aa)). Positions 727–758 (PFEPAGEPSPVNTDSSNPNPPEPDSHPVHSEF) are disordered. Residues 749-758 (PDSHPVHSEF) show a composition bias toward basic and acidic residues.

As to quaternary structure, monomer. May interact with CALU. Post-translationally, the N-terminus is blocked.

The protein localises to the endoplasmic reticulum membrane. It catalyses the reaction 4-carboxy-L-glutamyl-[protein] + 2,3-epoxyphylloquinone + H2O + H(+) = phylloquinol + L-glutamyl-[protein] + CO2 + O2. Functionally, mediates the vitamin K-dependent carboxylation of glutamate residues to calcium-binding gamma-carboxyglutamate (Gla) residues with the concomitant conversion of the reduced hydroquinone form of vitamin K to vitamin K epoxide. Catalyzes gamma-carboxylation of various proteins, such as blood coagulation factors (F2, F7, F9 and F10), osteocalcin (BGLAP) or matrix Gla protein (MGP). The polypeptide is Vitamin K-dependent gamma-carboxylase (GGCX) (Bos taurus (Bovine)).